Here is a 404-residue protein sequence, read N- to C-terminus: Cysteine desulfurase IscS (404 aa).

Pyridoxal 5'-phosphate contacts are provided by residues 75–76 (AT), Asn-155, Gln-183, and 203–205 (SAH). Lys-206 bears the N6-(pyridoxal phosphate)lysine mark. Thr-243 is a binding site for pyridoxal 5'-phosphate. The Cysteine persulfide intermediate role is filled by Cys-328. Cys-328 provides a ligand contact to [2Fe-2S] cluster.

It belongs to the class-V pyridoxal-phosphate-dependent aminotransferase family. NifS/IscS subfamily. In terms of assembly, homodimer. Forms a heterotetramer with IscU, interacts with other sulfur acceptors. Requires pyridoxal 5'-phosphate as cofactor.

It is found in the cytoplasm. It catalyses the reaction (sulfur carrier)-H + L-cysteine = (sulfur carrier)-SH + L-alanine. It participates in cofactor biosynthesis; iron-sulfur cluster biosynthesis. Master enzyme that delivers sulfur to a number of partners involved in Fe-S cluster assembly, tRNA modification or cofactor biosynthesis. Catalyzes the removal of elemental sulfur atoms from cysteine to produce alanine. Functions as a sulfur delivery protein for Fe-S cluster synthesis onto IscU, an Fe-S scaffold assembly protein, as well as other S acceptor proteins. The protein is Cysteine desulfurase IscS of Shewanella woodyi (strain ATCC 51908 / MS32).